The chain runs to 532 residues: Bone morphogenetic protein receptor type-1A (532 aa).

Residues 1 to 23 (MTQLYTYIRLLGACLFIISHVQG) form the signal peptide. Over 24–152 (QNLDSMLHGT…IGPFFDGSVR (129 aa)) the chain is Extracellular. Disulfide bonds link Cys-61–Cys-82, Cys-63–Cys-67, and Cys-76–Cys-100. Asn-73 carries N-linked (GlcNAc...) asparagine glycosylation. Positions 107-109 (DFQ) are mediates specificity for BMP ligand. 2 cysteine pairs are disulfide-bonded: Cys-110-Cys-124 and Cys-125-Cys-130. Residues 153-176 (WLAVLISMAVCIVAMIVFSSCFCY) traverse the membrane as a helical segment. The Cytoplasmic portion of the chain corresponds to 177 to 532 (KHYCKSISSR…KMVESQDVKI (356 aa)). In terms of domain architecture, GS spans 204 to 233 (ESLKDLIDQSQSSGSGSGLPLLVQRTIAKQ). The 292-residue stretch at 234 to 525 (IQMVRQVGKG…RIKKTLAKMV (292 aa)) folds into the Protein kinase domain. ATP is bound by residues 240 to 248 (VGKGRYGEV) and Lys-261. Asp-362 functions as the Proton acceptor in the catalytic mechanism.

Belongs to the protein kinase superfamily. TKL Ser/Thr protein kinase family. TGFB receptor subfamily. As to quaternary structure, interacts with low affinity with GDF5; positively regulates chondrocyte differentiation. Interacts with BMP4. Interacts with SCUBE3. Interacts with TSC22D1/TSC-22. Interacts with BMP2; the interaction may induce HAMP expression. Interacts with BMP6. Interacts with heterodimers composed of BMP2 and BMP6 in vitro; the interaction may induce HAMP expression. Mg(2+) serves as cofactor. Mn(2+) is required as a cofactor. Glycosylated.

It is found in the cell membrane. The protein resides in the cell surface. It carries out the reaction L-threonyl-[receptor-protein] + ATP = O-phospho-L-threonyl-[receptor-protein] + ADP + H(+). It catalyses the reaction L-seryl-[receptor-protein] + ATP = O-phospho-L-seryl-[receptor-protein] + ADP + H(+). In terms of biological role, on ligand binding, forms a receptor complex consisting of two type II and two type I transmembrane serine/threonine kinases. Type II receptors phosphorylate and activate type I receptors which autophosphorylate, then bind and activate SMAD transcriptional regulators. Receptor for BMP2, BMP4, GDF5 and GDF6. Positively regulates chondrocyte differentiation through GDF5 interaction. Mediates induction of adipogenesis by GDF6. May promote the expression of HAMP, potentially via its interaction with BMP2. This Rattus norvegicus (Rat) protein is Bone morphogenetic protein receptor type-1A (Bmpr1a).